Here is a 256-residue protein sequence, read N- to C-terminus: MTKFWIGTSWKMNKTLAEARLFAEALKAADAGRSPDIQRFVIPPFTAVREVKEILSGTSVKVGAQNMHWADQGTWTGEISPLMLKDCNLDIVELGHSERREHFGETNETVGLKVEAAVRHGLIPLICIGETLEDCESGRAAAVLEEEVRGALSKLSEAQKQAEILFAYEPVWAIGENGIPASADYADARQAEIIAVAQSVLARRVPCLYGGSVNPGNCEELIACPHIDGLFIGRSAWNVEGYLDILARCATKVQAN.

His96 functions as the Electrophile in the catalytic mechanism. Residue Glu169 is the Proton acceptor of the active site. Positions 175 and 212 each coordinate substrate.

The protein belongs to the triosephosphate isomerase family. As to quaternary structure, homodimer.

It is found in the cytoplasm. It catalyses the reaction L-erythrulose 1-phosphate = D-erythrulose 4-phosphate. The protein operates within carbohydrate metabolism; erythritol degradation. Functionally, catalyzes the isomerization of D-erythrulose-4P to L-erythrulose-1P. The polypeptide is L-erythrulose-1-phosphate isomerase (Brucella melitensis biotype 1 (strain ATCC 23456 / CCUG 17765 / NCTC 10094 / 16M)).